Here is a 343-residue protein sequence, read N- to C-terminus: L-threonine 3-dehydrogenase (343 aa).

Cys40 provides a ligand contact to Zn(2+). Residues Thr42 and His45 each act as charge relay system in the active site. 6 residues coordinate Zn(2+): His65, Glu66, Cys95, Cys98, Cys101, and Cys109. Residues Ile177, Asp197, Arg202, 264–266, and 288–289 each bind NAD(+); these read LGI and IY.

It belongs to the zinc-containing alcohol dehydrogenase family. In terms of assembly, homotetramer. Zn(2+) serves as cofactor.

The protein resides in the cytoplasm. It carries out the reaction L-threonine + NAD(+) = (2S)-2-amino-3-oxobutanoate + NADH + H(+). Its pathway is amino-acid degradation; L-threonine degradation via oxydo-reductase pathway; glycine from L-threonine: step 1/2. Its function is as follows. Catalyzes the NAD(+)-dependent oxidation of L-threonine to 2-amino-3-ketobutyrate. The polypeptide is L-threonine 3-dehydrogenase (Aliivibrio fischeri (strain ATCC 700601 / ES114) (Vibrio fischeri)).